The following is a 1412-amino-acid chain: DNA-directed RNA polymerase subunit beta (1412 aa).

It belongs to the RNA polymerase beta chain family. The RNAP catalytic core consists of 2 alpha, 1 beta, 1 beta' and 1 omega subunit. When a sigma factor is associated with the core the holoenzyme is formed, which can initiate transcription.

The catalysed reaction is RNA(n) + a ribonucleoside 5'-triphosphate = RNA(n+1) + diphosphate. In terms of biological role, DNA-dependent RNA polymerase catalyzes the transcription of DNA into RNA using the four ribonucleoside triphosphates as substrates. The chain is DNA-directed RNA polymerase subunit beta from Bdellovibrio bacteriovorus (strain ATCC 15356 / DSM 50701 / NCIMB 9529 / HD100).